We begin with the raw amino-acid sequence, 110 residues long: Protein C-ets-2 (110 aa).

The segment at residues 1–84 (SGPIQLWQFL…AGKRYVYRFV (84 aa)) is a DNA-binding region (ETS).

The protein belongs to the ETS family.

It is found in the nucleus. Functionally, probable transcription factor. This chain is Protein C-ets-2 (ETS-2), found in Lytechinus variegatus (Green sea urchin).